The primary structure comprises 388 residues: Ribonuclease D (388 aa).

In terms of domain architecture, 3'-5' exonuclease spans 7–173 (ITDSKTLAQF…QIFPKMLEEL (167 aa)). Residues 212 to 293 (KADVLGRLKA…ASHAPLAKEE (82 aa)) form the HRDC domain.

This sequence belongs to the RNase D family. A divalent metal cation serves as cofactor.

Its subcellular location is the cytoplasm. The enzyme catalyses Exonucleolytic cleavage that removes extra residues from the 3'-terminus of tRNA to produce 5'-mononucleotides.. Its function is as follows. Exonuclease involved in the 3' processing of various precursor tRNAs. Initiates hydrolysis at the 3'-terminus of an RNA molecule and releases 5'-mononucleotides. In Sphingobium indicum (strain DSM 16413 / CCM 7287 / MTCC 6362 / UT26 / NBRC 101211 / UT26S) (Sphingobium japonicum), this protein is Ribonuclease D.